Reading from the N-terminus, the 106-residue chain is Iron-sulfur cluster assembly protein CyaY (106 aa).

It belongs to the frataxin family.

Its function is as follows. Involved in iron-sulfur (Fe-S) cluster assembly. May act as a regulator of Fe-S biogenesis. The protein is Iron-sulfur cluster assembly protein CyaY of Photorhabdus laumondii subsp. laumondii (strain DSM 15139 / CIP 105565 / TT01) (Photorhabdus luminescens subsp. laumondii).